Reading from the N-terminus, the 401-residue chain is Phosphoglycerate kinase (401 aa).

Residues 21–23 (DLN), arginine 37, 60–63 (HLGR), arginine 119, and arginine 152 each bind substrate. ATP-binding positions include lysine 203, glutamate 325, and 351–354 (GGDT).

It belongs to the phosphoglycerate kinase family. In terms of assembly, monomer.

The protein resides in the cytoplasm. The enzyme catalyses (2R)-3-phosphoglycerate + ATP = (2R)-3-phospho-glyceroyl phosphate + ADP. The protein operates within carbohydrate degradation; glycolysis; pyruvate from D-glyceraldehyde 3-phosphate: step 2/5. This chain is Phosphoglycerate kinase, found in Acidithiobacillus ferrooxidans (strain ATCC 23270 / DSM 14882 / CIP 104768 / NCIMB 8455) (Ferrobacillus ferrooxidans (strain ATCC 23270)).